The chain runs to 628 residues: Propionate--CoA ligase (628 aa).

It belongs to the ATP-dependent AMP-binding enzyme family.

It carries out the reaction propanoate + ATP + CoA = propanoyl-CoA + AMP + diphosphate. It functions in the pathway organic acid metabolism; propanoate degradation. Functionally, catalyzes the synthesis of propionyl-CoA from propionate and CoA. Also converts acetate to acetyl-CoA but with a lower specific activity. The chain is Propionate--CoA ligase (prpE) from Escherichia coli (strain K12).